We begin with the raw amino-acid sequence, 513 residues long: ATP synthase subunit alpha (513 aa).

Position 169–176 (169–176) interacts with ATP; it reads GDRQTGKT.

It belongs to the ATPase alpha/beta chains family. As to quaternary structure, F-type ATPases have 2 components, CF(1) - the catalytic core - and CF(0) - the membrane proton channel. CF(1) has five subunits: alpha(3), beta(3), gamma(1), delta(1), epsilon(1). CF(0) has three main subunits: a(1), b(2) and c(9-12). The alpha and beta chains form an alternating ring which encloses part of the gamma chain. CF(1) is attached to CF(0) by a central stalk formed by the gamma and epsilon chains, while a peripheral stalk is formed by the delta and b chains.

The protein resides in the cell inner membrane. It catalyses the reaction ATP + H2O + 4 H(+)(in) = ADP + phosphate + 5 H(+)(out). Produces ATP from ADP in the presence of a proton gradient across the membrane. The alpha chain is a regulatory subunit. The sequence is that of ATP synthase subunit alpha from Yersinia pseudotuberculosis serotype O:1b (strain IP 31758).